The following is a 304-amino-acid chain: UDP-N-acetylenolpyruvoylglucosamine reductase (304 aa).

The FAD-binding PCMH-type domain occupies 33–198 (RVGGPADILV…IEATVELESG (166 aa)). The active site involves Arg177. The active-site Proton donor is the Ser227. Residue Glu297 is part of the active site.

It belongs to the MurB family. It depends on FAD as a cofactor.

It localises to the cytoplasm. The catalysed reaction is UDP-N-acetyl-alpha-D-muramate + NADP(+) = UDP-N-acetyl-3-O-(1-carboxyvinyl)-alpha-D-glucosamine + NADPH + H(+). The protein operates within cell wall biogenesis; peptidoglycan biosynthesis. Cell wall formation. The sequence is that of UDP-N-acetylenolpyruvoylglucosamine reductase from Clostridium perfringens (strain ATCC 13124 / DSM 756 / JCM 1290 / NCIMB 6125 / NCTC 8237 / Type A).